The sequence spans 224 residues: Lipoprotein-releasing system ATP-binding protein LolD (224 aa).

One can recognise an ABC transporter domain in the interval 6 to 224 (LEFCNVSKFF…IVNHSLISSI (219 aa)). Position 43 to 50 (43 to 50 (GASGVGKT)) interacts with ATP.

This sequence belongs to the ABC transporter superfamily. Lipoprotein translocase (TC 3.A.1.125) family. The complex is composed of two ATP-binding proteins (LolD) and two transmembrane proteins (LolC and LolE).

The protein resides in the cell inner membrane. Functionally, part of the ABC transporter complex LolCDE involved in the translocation of mature outer membrane-directed lipoproteins, from the inner membrane to the periplasmic chaperone, LolA. Responsible for the formation of the LolA-lipoprotein complex in an ATP-dependent manner. This chain is Lipoprotein-releasing system ATP-binding protein LolD, found in Neorickettsia sennetsu (strain ATCC VR-367 / Miyayama) (Ehrlichia sennetsu).